A 539-amino-acid polypeptide reads, in one-letter code: Heparanase-like protein 2 (539 aa).

The first 21 residues, 1 to 21 (MGFNVVVFLSCLLLLPPVTFG), serve as a signal peptide directing secretion. 3 N-linked (GlcNAc...) asparagine glycosylation sites follow: Asn143, Asn163, and Asn181. Glu198 serves as the catalytic Proton donor. Asn300 carries an N-linked (GlcNAc...) asparagine glycan. Glu316 (nucleophile) is an active-site residue. Asn421 is a glycosylation site (N-linked (GlcNAc...) asparagine).

This sequence belongs to the glycosyl hydrolase 79 family.

The protein resides in the lysosome membrane. It is found in the secreted. In terms of biological role, endoglycosidase which is a cell surface and extracellular matrix-degrading enzyme. Cleaves heparan sulfate proteoglycans (HSPGs) into heparan sulfate side chains and core proteoglycans. This chain is Heparanase-like protein 2, found in Arabidopsis thaliana (Mouse-ear cress).